The sequence spans 363 residues: tRNA/tmRNA (uracil-C(5))-methyltransferase (363 aa).

Gln187, Tyr215, Asn220, Glu236, and Asp296 together coordinate S-adenosyl-L-methionine. The active-site Nucleophile is Cys321. Glu355 (proton acceptor) is an active-site residue.

This sequence belongs to the class I-like SAM-binding methyltransferase superfamily. RNA M5U methyltransferase family. TrmA subfamily.

It catalyses the reaction uridine(54) in tRNA + S-adenosyl-L-methionine = 5-methyluridine(54) in tRNA + S-adenosyl-L-homocysteine + H(+). It carries out the reaction uridine(341) in tmRNA + S-adenosyl-L-methionine = 5-methyluridine(341) in tmRNA + S-adenosyl-L-homocysteine + H(+). Its function is as follows. Dual-specificity methyltransferase that catalyzes the formation of 5-methyluridine at position 54 (m5U54) in all tRNAs, and that of position 341 (m5U341) in tmRNA (transfer-mRNA). The protein is tRNA/tmRNA (uracil-C(5))-methyltransferase of Pseudomonas aeruginosa (strain UCBPP-PA14).